A 109-amino-acid polypeptide reads, in one-letter code: MFAQSFIITALAALAVASPLQVRTSDKCNTGTVHCCNSMKKSDSADISKIASLLQLDVKGVVGDVGLQCSPLVSLVGGGSKCSGQTVCCDQTKFNGLVNIGCSPINVGL.

A signal peptide spans 1-17 (MFAQSFIITALAALAVA). 4 cysteine pairs are disulfide-bonded: cysteine 28-cysteine 88, cysteine 35-cysteine 82, cysteine 36-cysteine 69, and cysteine 89-cysteine 102.

This sequence belongs to the fungal hydrophobin family. Self-assembles to form functional amyloid fibrils called rodlets. Self-assembly into fibrillar rodlets occurs spontaneously at hydrophobic:hydrophilic interfaces and the rodlets further associate laterally to form amphipathic monolayers.

It localises to the secreted. The protein localises to the cell wall. Functionally, aerial growth, conidiation, and dispersal of filamentous fungi in the environment rely upon a capability of their secreting small amphipathic proteins called hydrophobins (HPBs) with low sequence identity. Class I can self-assemble into an outermost layer of rodlet bundles on aerial cell surfaces, conferring cellular hydrophobicity that supports fungal growth, development and dispersal; whereas Class II form highly ordered films at water-air interfaces through intermolecular interactions but contribute nothing to the rodlet structure. Hydph7 is a class I hydrophobin involved in fruiting body development. The sequence is that of Class I hydrophobin 7 from Pleurotus ostreatus (strain PC15) (Oyster mushroom).